Here is a 114-residue protein sequence, read N- to C-terminus: Iron-sulfur cluster insertion protein ErpA (114 aa).

Iron-sulfur cluster-binding residues include cysteine 42, cysteine 106, and cysteine 108.

Belongs to the HesB/IscA family. In terms of assembly, homodimer. Iron-sulfur cluster is required as a cofactor.

Functionally, required for insertion of 4Fe-4S clusters for at least IspG. The polypeptide is Iron-sulfur cluster insertion protein ErpA (Edwardsiella ictaluri (strain 93-146)).